A 338-amino-acid polypeptide reads, in one-letter code: Patr class I histocompatibility antigen, alpha chain G (338 aa).

The signal sequence occupies residues M1 to A24. An alpha-1 region spans residues G25–A114. Residues G25–I308 lie on the Extracellular side of the membrane. N-linked (GlcNAc...) asparagine glycosylation occurs at N110. The alpha-2 stretch occupies residues S115–A206. 2 disulfide bridges follow: C125–C188 and C227–C283. Residues D207–W298 form an alpha-3 region. The Ig-like C1-type domain maps to P209–K299. A connecting peptide region spans residues K299–I308. The chain crosses the membrane as a helical span at residues M309–W332. Residues R333–D338 lie on the Cytoplasmic side of the membrane.

Belongs to the MHC class I family. As to quaternary structure, heterodimer of an alpha chain and a beta chain (beta-2-microglobulin). Homodimer; disulfide-linked. Binds to LILRB1 and LILRB2.

The protein localises to the cell membrane. Its function is as follows. Involved in the presentation of foreign antigens to the immune system. This chain is Patr class I histocompatibility antigen, alpha chain G (Patr-G), found in Pan troglodytes (Chimpanzee).